Reading from the N-terminus, the 263-residue chain is Ribonuclease HII (263 aa).

One can recognise an RNase H type-2 domain in the interval Q71–N262. 3 residues coordinate a divalent metal cation: D77, E78, and D172.

It belongs to the RNase HII family. Mn(2+) serves as cofactor. Requires Mg(2+) as cofactor.

Its subcellular location is the cytoplasm. It carries out the reaction Endonucleolytic cleavage to 5'-phosphomonoester.. Endonuclease that specifically degrades the RNA of RNA-DNA hybrids. The polypeptide is Ribonuclease HII (Streptococcus pyogenes serotype M3 (strain ATCC BAA-595 / MGAS315)).